The chain runs to 88 residues: Small ribosomal subunit protein bS20 (88 aa).

Residues 1-25 are disordered; the sequence is MANTAQALKRIRQTNKARAQNASQR. Residues 16-25 are compositionally biased toward polar residues; sequence KARAQNASQR.

This sequence belongs to the bacterial ribosomal protein bS20 family.

In terms of biological role, binds directly to 16S ribosomal RNA. This chain is Small ribosomal subunit protein bS20, found in Dichelobacter nodosus (strain VCS1703A).